The sequence spans 205 residues: GTP cyclohydrolase-2 (205 aa).

GTP is bound at residue 49–53 (RIHSE). Residues Cys54, Cys65, and Cys67 each coordinate Zn(2+). Residues Gln70, 92–94 (EGR), and Thr114 each bind GTP. The active-site Proton acceptor is the Asp126. The active-site Nucleophile is Arg128. The GTP site is built by Thr149 and Lys154.

It belongs to the GTP cyclohydrolase II family. The cofactor is Zn(2+).

It catalyses the reaction GTP + 4 H2O = 2,5-diamino-6-hydroxy-4-(5-phosphoribosylamino)-pyrimidine + formate + 2 phosphate + 3 H(+). The protein operates within cofactor biosynthesis; riboflavin biosynthesis; 5-amino-6-(D-ribitylamino)uracil from GTP: step 1/4. In terms of biological role, catalyzes the conversion of GTP to 2,5-diamino-6-ribosylamino-4(3H)-pyrimidinone 5'-phosphate (DARP), formate and pyrophosphate. This Shewanella amazonensis (strain ATCC BAA-1098 / SB2B) protein is GTP cyclohydrolase-2.